Consider the following 419-residue polypeptide: Carboxypeptidase A1 (419 aa).

The N-terminal stretch at methionine 1–glycine 16 is a signal peptide. A propeptide spans asparagine 17 to arginine 110 (activation peptide). A Peptidase M14 domain is found at threonine 121–threonine 414. The Zn(2+) site is built by histidine 179 and glutamate 182. Residues histidine 179–glutamate 182, arginine 237, and asparagine 254–arginine 255 each bind substrate. Cysteine 248 and cysteine 271 form a disulfide bridge. Residue histidine 306 coordinates Zn(2+). Substrate is bound by residues serine 307–tyrosine 308 and tyrosine 358. Residue glutamate 380 is the Proton donor/acceptor of the active site.

This sequence belongs to the peptidase M14 family. In terms of assembly, monomer. May form a complex with proelastase 2. The cofactor is Zn(2+).

It localises to the secreted. The enzyme catalyses Release of a C-terminal amino acid, but little or no action with -Asp, -Glu, -Arg, -Lys or -Pro.. It carries out the reaction leukotriene C4 + H2O = leukotriene F4 + glycine. Its function is as follows. Carboxypeptidase that catalyzes the release of a C-terminal amino acid, but has little or no action with -Asp, -Glu, -Arg, -Lys or -Pro. Catalyzes the conversion of leukotriene C4 to leukotriene F4 via the hydrolysis of an amide bond. This chain is Carboxypeptidase A1, found in Rattus norvegicus (Rat).